We begin with the raw amino-acid sequence, 390 residues long: 5-hydroxytryptamine receptor 1B (390 aa).

The interval 1–21 (MEETGAQCAPPPPAGSQTGVS) is disordered. Residues 1 to 46 (MEETGAQCAPPPPAGSQTGVSQVNLSAAPSHNCSTEGYVYQDSVAL) are Extracellular-facing. N-linked (GlcNAc...) asparagine glycosylation is found at Asn24 and Asn32. A helical transmembrane segment spans residues 47–72 (PWKVLLVVLLALITLATTLSNAFVIA). The Cytoplasmic portion of the chain corresponds to 73–86 (TVYRTRKLHTPANY). The helical transmembrane segment at 87–111 (LIASLAVTDLLVSILVMPISTMYVV) threads the bilayer. Residues 112 to 119 (TGRWTLGQ) are Extracellular-facing. Residues 120-145 (VVCDFWLSSDITCCTASILHLCVIAL) form a helical membrane-spanning segment. A disulfide bridge links Cys122 with Cys199. Asp129 and Thr134 together coordinate ergotamine. The short motif at 146 to 148 (DRY) is the DRY motif; important for ligand-induced conformation changes and signaling element. Topologically, residues 146-165 (DRYWAITDAVEYSAKRTPKR) are cytoplasmic. Residues 166–184 (AAVMIALVWVFSISISLPP) form a helical membrane-spanning segment. Residues 185 to 205 (FFWRQAKAEEEVLDCLVNTDH) are Extracellular-facing. Val201 provides a ligand contact to ergotamine. A helical transmembrane segment spans residues 206-229 (ILYTVYSTVGAFYFPTLLLIALYS). Over 230–315 (RIYVEARSRI…AARERKATKT (86 aa)) the chain is Cytoplasmic. The tract at residues 251–282 (LTRAQLMTDSPGSTSSVTSINSRAPDVPSESG) is disordered. Over residues 255–272 (QLMTDSPGSTSSVTSINS) the composition is skewed to polar residues. The chain crosses the membrane as a helical span at residues 316–337 (LGIILGAFIVCWLPFFIISLVM). The Extracellular segment spans residues 338–347 (PICKDACWFH). A helical membrane pass occupies residues 348–370 (LAIFDFFTWLGYLNSLINPIIYT). Residues 365-369 (NPIIY) carry the NPxxY motif; important for ligand-induced conformation changes and signaling motif. Topologically, residues 371 to 390 (MSNEDFKQAFHKLIRFKCAS) are cytoplasmic. Cys388 is lipidated: S-palmitoyl cysteine.

It belongs to the G-protein coupled receptor 1 family. Homodimer. Heterodimer with HTR1D. Phosphorylated. Desensitization of the receptor may be mediated by its phosphorylation. In terms of processing, palmitoylated.

Its subcellular location is the cell membrane. In terms of biological role, G-protein coupled receptor for 5-hydroxytryptamine (serotonin). Also functions as a receptor for ergot alkaloid derivatives, various anxiolytic and antidepressant drugs and other psychoactive substances, such as lysergic acid diethylamide (LSD). Ligand binding causes a conformation change that triggers signaling via guanine nucleotide-binding proteins (G proteins) and modulates the activity of downstream effectors, such as adenylate cyclase. HTR1B is coupled to G(i)/G(o) G alpha proteins and mediates inhibitory neurotransmission by inhibiting adenylate cyclase activity. Arrestin family members inhibit signaling via G proteins and mediate activation of alternative signaling pathways. Regulates the release of 5-hydroxytryptamine, dopamine and acetylcholine in the brain, and thereby affects neural activity, nociceptive processing, pain perception, mood and behavior. Besides, plays a role in vasoconstriction of cerebral arteries. The protein is 5-hydroxytryptamine receptor 1B (HTR1B) of Equus caballus (Horse).